Reading from the N-terminus, the 182-residue chain is ATP synthase subunit delta (182 aa).

The protein belongs to the ATPase delta chain family. As to quaternary structure, F-type ATPases have 2 components, F(1) - the catalytic core - and F(0) - the membrane proton channel. F(1) has five subunits: alpha(3), beta(3), gamma(1), delta(1), epsilon(1). F(0) has three main subunits: a(1), b(2) and c(10-14). The alpha and beta chains form an alternating ring which encloses part of the gamma chain. F(1) is attached to F(0) by a central stalk formed by the gamma and epsilon chains, while a peripheral stalk is formed by the delta and b chains.

The protein localises to the cell inner membrane. F(1)F(0) ATP synthase produces ATP from ADP in the presence of a proton or sodium gradient. F-type ATPases consist of two structural domains, F(1) containing the extramembraneous catalytic core and F(0) containing the membrane proton channel, linked together by a central stalk and a peripheral stalk. During catalysis, ATP synthesis in the catalytic domain of F(1) is coupled via a rotary mechanism of the central stalk subunits to proton translocation. In terms of biological role, this protein is part of the stalk that links CF(0) to CF(1). It either transmits conformational changes from CF(0) to CF(1) or is implicated in proton conduction. This is ATP synthase subunit delta from Hydrogenobaculum sp. (strain Y04AAS1).